The sequence spans 258 residues: Calcium release-activated calcium channel protein 1 (258 aa).

Topologically, residues 1–63 (MYPECGVETK…SRAKLKASSR (63 aa)) are cytoplasmic. The chain crosses the membrane as a helical span at residues 64–81 (TSALLSGFAMVAMVEVQL). The Extracellular portion of the chain corresponds to 82-91 (EPNHAYPPGL). The chain crosses the membrane as a helical span at residues 92–112 (LIAFSACTTVLVAVHLFALMV). Residues 113-145 (STCILPNIEAVSNVHNLNSVKESPHERMHHHIE) lie on the Cytoplasmic side of the membrane. The helical transmembrane segment at 146–166 (LAWAFSTVIGTLLFLAEVVLL) threads the bilayer. Residues 167 to 192 (CWVKFLPVNSPKISSNETSAVSSGQA) are Extracellular-facing. Asn182 carries N-linked (GlcNAc...) asparagine glycosylation. A helical membrane pass occupies residues 193–213 (AAITSTAIMVPFGLVFIVFAV). Topologically, residues 214–258 (HFYRSLVSHKTDRQFQELNELAELAQLQDQLDHRGDPVQSPVHYA) are cytoplasmic.

The protein belongs to the Orai family.

It is found in the cell membrane. Its function is as follows. Ca(2+) release-activated Ca(2+) (CRAC) channel subunit which mediates Ca(2+) influx following depletion of intracellular Ca(2+) stores. This Xenopus laevis (African clawed frog) protein is Calcium release-activated calcium channel protein 1 (orai1).